The following is a 674-amino-acid chain: Xaa-Pro aminopeptidase 2 (674 aa).

The signal sequence occupies residues 1–22 (MAQAYWQCYPWLVLLCACAWSY). N-linked (GlcNAc...) asparagine glycosylation occurs at Asn-65. Arg-116 provides a ligand contact to substrate. Asn-278 and Asn-293 each carry an N-linked (GlcNAc...) asparagine glycan. Position 430 (His-430) interacts with substrate. The Zn(2+) site is built by Asp-450, Asp-461, and His-524. Residues His-524, His-533, and Glu-555 each contribute to the substrate site. Glu-555 and Glu-569 together coordinate Zn(2+). Ala-650 carries GPI-anchor amidated alanine lipidation. Residues 651 to 674 (SAPHTTSLASMWVASALAILSWSC) constitute a propeptide, removed in mature form.

It belongs to the peptidase M24B family. As to quaternary structure, homotrimer. The cofactor is Zn(2+). Post-translationally, N-glycosylated. Expressed strongly in lung, liver and heart, and at lower levels in kidney, testis, brain, spleen and skeletal muscle.

Its subcellular location is the cell membrane. The enzyme catalyses Release of any N-terminal amino acid, including proline, that is linked to proline, even from a dipeptide or tripeptide.. Inhibited by the chelating agents 1,10-phenanthroline and EDTA. Inhibited by the thiol-containing compounds 2-mercaptoethanol and dithiothreitol. Also inhibited by apstatin, captopril and p-(ch1oromercuri)benzenesulfonic acid. Weakly inhibited by D,L-2-mercaptomethyl-3-guanidinoethylthiopropanoic acid and N-[l-(R,S)-carboxy-(2-phenylethyl)]-Ala-Ala-Phe-p-aminobenzoate. Inhibited by ramiprilat and enalaprilat, in a Mn(2+)-dependent manner. Metal ions have a complex substrate- and concentration-dependent effect on activity. Activity towards Arg-Pro-Pro and Gly-Pro-Hyp is stimulated by Mn(2+) ion concentrations of 10-100 uM and then inhibited at Mn(2+) concentrations of 1-2 mM. Mn(2+) concentrations in excess of 2 mM stimulate activity towards Gly-Pro-Hyp but inhibit activity towards Arg-Pro-Pro. Zn(2+) and Co(2+) ions also inhibit activity towards Arg-Pro-Pro at high concentrations. Activity towards bradykinin is inhibited by Mn(2+) concentrations in excess of 1 mM. Membrane-bound metalloprotease which catalyzes the removal of a penultimate prolyl residue from the N-termini of peptides, such as Arg-Pro-Pro. May play a role in the metabolism of the vasodilator bradykinin. In Rattus norvegicus (Rat), this protein is Xaa-Pro aminopeptidase 2.